The chain runs to 50 residues: Protein HokE (50 aa).

Residues 5 to 25 (YALVAVIVLCLTVLGFTLLVG) form a helical membrane-spanning segment.

Belongs to the Hok/Gef family.

Its subcellular location is the cell inner membrane. Toxic component of a type I toxin-antitoxin (TA) system. When overexpressed kills cells within minutes; causes collapse of the transmembrane potential and arrest of respiration. Its toxic effect is probably neutralized by an antisense antitoxin Sok RNA. This is Protein HokE (hokE) from Escherichia coli O157:H7.